The following is a 539-amino-acid chain: Chaperonin GroEL (539 aa).

ATP is bound by residues 29–32 (TIGP), 86–90 (DGTTT), Gly413, 476–478 (NAA), and Asp492.

It belongs to the chaperonin (HSP60) family. Forms a cylinder of 14 subunits composed of two heptameric rings stacked back-to-back. Interacts with the co-chaperonin GroES.

It is found in the cytoplasm. It catalyses the reaction ATP + H2O + a folded polypeptide = ADP + phosphate + an unfolded polypeptide.. Together with its co-chaperonin GroES, plays an essential role in assisting protein folding. The GroEL-GroES system forms a nano-cage that allows encapsulation of the non-native substrate proteins and provides a physical environment optimized to promote and accelerate protein folding. This chain is Chaperonin GroEL, found in Pediococcus pentosaceus (strain ATCC 25745 / CCUG 21536 / LMG 10740 / 183-1w).